Consider the following 211-residue polypeptide: Protein-L-isoaspartate O-methyltransferase 1 (211 aa).

S62 is a catalytic residue.

This sequence belongs to the methyltransferase superfamily. L-isoaspartyl/D-aspartyl protein methyltransferase family.

The protein localises to the cytoplasm. The catalysed reaction is [protein]-L-isoaspartate + S-adenosyl-L-methionine = [protein]-L-isoaspartate alpha-methyl ester + S-adenosyl-L-homocysteine. In terms of biological role, catalyzes the methyl esterification of L-isoaspartyl residues in peptides and proteins that result from spontaneous decomposition of normal L-aspartyl and L-asparaginyl residues. It plays a role in the repair and/or degradation of damaged proteins. The chain is Protein-L-isoaspartate O-methyltransferase 1 from Shewanella sediminis (strain HAW-EB3).